Here is a 1224-residue protein sequence, read N- to C-terminus: MKIWRFFLMKERTRLPFDNLPFYNKVMDKTAIKKLISRLIDHFGMTYTSHILDQLKTSGFQQATDTAISLGIDDLLTAPSKGWLVQDAEQQGSVSEKQNHYGNVHAVEKLRQSIEIWYATSEYLRKEMNPNFSMTDPLNPVHVMSFSGARGSTSQVHQLVGMRGLMSDPQGQIIDLPIRRNLREGLSLTEYIISCYGARKGVVDTAVRTADAGYLTRRLVEVVQHIVVRRTDCGTIQGIFVSPIRGRERDRNEIVVRTQILIGRVLADDVYINRRCIATRNQDIGVGLANQLINLRTQPIYIRTPFTCKSISRICQLCYGRSTTHSHLIELGEAVGIIAGQSIGEPGTQLTLRTFHTGGVFTGDIAEHIRAPFNGKIEFNENLVYPTRTRNGHPAYLCHNNLSITIDGQDQVQNLTIPPQSLLLVQNDQYVESEQLIAEVRARTSSFKEKVRKNIYSDLEGEMHWSTNVCHAPEYVQGNVHPILRTGYLWILSGGIYGSRVVPFPFHKYQDQVYVQPFVAKHQSLSDSYVDQVEHRSGDSNCYEKEEQIFSYSETETDRTISNKHRDSIYVFYPNNYNIKGKKQMNRFIVSLQCDKEWEKKIIPCPDAILRIPKSGILQRNSIFGYSNVEHGIPDGSNMTTPFSLDLSREGDNLQIQISYSISYEDGERIQVMSDISIPLVRTCIGFDWEQIDSIESEAYVSLISVRTNKIVNNMVQISLMKYPPFFMGRRDNKTSPNLMFHNNLDHTNLLSSNGASQLISKHQGIICSLSNGEEDSGSFMVLSPSDYFRIVLFNDSKCYDTGNQSNRKDPMRKIIEFSGLLGNLHSITNRFPSSHFLTYKKVLSKKHSIFHNSFNTFQVPKYYFMDENMIIYHFDPCRNIISNLLGPNWCSSSSESEFCEKTFPVVSLGQLIPESVWISEDEPLPESGQIIAVDEESLVIRSAKPYLATRKATVHSHYGKILDKGDTLITLIYERFKSSDIIQGLPKVEQLSEARLNNSISMNLKESFENWTGDMTRFLGSLWGLFISARITMEQSQIHLVNQIQKVYRSQGVRIGDKHIEVIVRQMTSKVLISEDGTANVFSPGELIVLSRAQRMDRALEEAIYYQTMLLGITRASLNTQSFISEASFQETARVLAKAALQGRIDWLKGLKENVILGGMIPAGTGQHIHRSGKRNGIDPRIGNRNLFSNKVKDILFHHDKVDFFSFQDNSYKYHNILKQQLK.

Residues Cys-233, Cys-308, Cys-315, and Cys-318 each coordinate Zn(2+).

Belongs to the RNA polymerase beta' chain family. RpoC2 subfamily. In terms of assembly, in plastids the minimal PEP RNA polymerase catalytic core is composed of four subunits: alpha, beta, beta', and beta''. When a (nuclear-encoded) sigma factor is associated with the core the holoenzyme is formed, which can initiate transcription. It depends on Zn(2+) as a cofactor.

The protein resides in the plastid. It localises to the chloroplast. The enzyme catalyses RNA(n) + a ribonucleoside 5'-triphosphate = RNA(n+1) + diphosphate. Functionally, DNA-dependent RNA polymerase catalyzes the transcription of DNA into RNA using the four ribonucleoside triphosphates as substrates. The polypeptide is DNA-directed RNA polymerase subunit beta'' (Pinus thunbergii (Japanese black pine)).